Reading from the N-terminus, the 690-residue chain is Highly divergent homeobox (690 aa).

The homeobox 1 DNA-binding region spans 3–63 (LRSVFTVEQQ…NKRRKMSSKN (61 aa)). 2 disordered regions span residues 55-76 (KRRK…TSLS) and 112-132 (SPAS…QITE). Residues 64–76 (SESGTATTGTSLS) are compositionally biased toward low complexity. Residues 113 to 123 (PASSSSRQGTN) are compositionally biased toward polar residues. Glycyl lysine isopeptide (Lys-Gly) (interchain with G-Cter in SUMO2) cross-links involve residues Lys135, Lys140, Lys144, Lys163, Lys172, Lys194, Lys212, Lys221, and Lys232. The segment at residues 435–498 (ALQDRTQFSD…NRRRKYRLMG (64 aa)) is a DNA-binding region (homeobox 2). Residues 501-539 (VPPPRGGPADFSEQPESGSLSALTPGEEAGPEVGEDNDR) are disordered. Lys613 is covalently cross-linked (Glycyl lysine isopeptide (Lys-Gly) (interchain with G-Cter in SUMO2)). The tract at residues 664–690 (FNHASLEPDDTSFSVSSLSEKNVSESL) is disordered. A compositionally biased stretch (polar residues) spans 674-690 (TSFSVSSLSEKNVSESL).

It is found in the nucleus. The protein is Highly divergent homeobox (HDX) of Homo sapiens (Human).